Reading from the N-terminus, the 292-residue chain is Cbb3-type cytochrome c oxidase subunit CcoP (292 aa).

Helical transmembrane passes span 11-31 (FGLI…SSLI) and 62-82 (VGWI…FFFG). Cytochrome c domains are found at residues 116–195 (ELVD…MAEI) and 205–288 (QLID…QSLK). Heme c-binding residues include cysteine 129, cysteine 132, histidine 133, methionine 174, cysteine 219, cysteine 222, histidine 223, and methionine 264.

The protein belongs to the CcoP / FixP family. As to quaternary structure, component of the cbb3-type cytochrome c oxidase at least composed of CcoN, CcoO, CcoQ and CcoP. The cofactor is heme c.

The protein localises to the cell inner membrane. It functions in the pathway energy metabolism; oxidative phosphorylation. Its function is as follows. C-type cytochrome. Part of the cbb3-type cytochrome c oxidase complex. CcoP subunit is required for transferring electrons from donor cytochrome c via its heme groups to CcoO subunit. From there, electrons are shuttled to the catalytic binuclear center of CcoN subunit where oxygen reduction takes place. The complex also functions as a proton pump. The sequence is that of Cbb3-type cytochrome c oxidase subunit CcoP from Helicobacter pylori (strain 52).